The sequence spans 191 residues: Large ribosomal subunit protein uL6 (191 aa).

The protein belongs to the universal ribosomal protein uL6 family. As to quaternary structure, part of the 50S ribosomal subunit.

This protein binds to the 23S rRNA, and is important in its secondary structure. It is located near the subunit interface in the base of the L7/L12 stalk, and near the tRNA binding site of the peptidyltransferase center. The sequence is that of Large ribosomal subunit protein uL6 from Cyanothece sp. (strain PCC 7425 / ATCC 29141).